Here is a 205-residue protein sequence, read N- to C-terminus: Guanylate kinase (205 aa).

One can recognise a Guanylate kinase-like domain in the interval 3–183 (GFVLLISGPS…SYEALRAILI (181 aa)). Residue 10–17 (GPSGAGKS) coordinates ATP.

Belongs to the guanylate kinase family.

The protein localises to the cytoplasm. It catalyses the reaction GMP + ATP = GDP + ADP. In terms of biological role, essential for recycling GMP and indirectly, cGMP. The polypeptide is Guanylate kinase (Campylobacter jejuni (strain RM1221)).